Here is a 591-residue protein sequence, read N- to C-terminus: Inactive metallocarboxypeptidase ECM14 (591 aa).

The signal sequence occupies residues 1–21; it reads MRLFARLEVLAILACAVPIAA. Residues 22–175 constitute a propeptide that is removed on maturation; the sequence is IPSFLSNSYP…QTIYESYPSS (154 aa). The region spanning 203-523 is the Peptidase M14 domain; the sequence is DYQPFSVIVT…NAVMVLGRFL (321 aa). Positions 265 and 268 each coordinate Zn(2+). Substrate contacts are provided by residues 265 to 268, arginine 323, and 340 to 341; these read HARE and DR. A disulfide bridge links cysteine 334 with cysteine 357. N-linked (GlcNAc...) asparagine glycosylation is found at asparagine 350 and asparagine 381. Residue histidine 397 participates in Zn(2+) binding. 398–399 serves as a coordination point for substrate; sequence SY. Residues 533–543 are compositionally biased toward basic and acidic residues; it reads DWEDESQRPKA. The disordered stretch occupies residues 533-591; that stretch reads DWEDESQRPKADEDDIPSENELGENDDSWIPFDYRNHDDQNEGEGYDNDEWGFRRRRKG. Acidic residues-rich tracts occupy residues 544–559 and 573–582; these read DEDD…ENDD and NEGEGYDNDE.

Belongs to the peptidase M14 family. Requires Zn(2+) as cofactor.

It is found in the vacuole. The protein localises to the secreted. Functionally, inactive carboxypeptidase that may play a role in cell wall organization and biogenesis. This Paracoccidioides lutzii (strain ATCC MYA-826 / Pb01) (Paracoccidioides brasiliensis) protein is Inactive metallocarboxypeptidase ECM14 (ECM14).